The following is a 432-amino-acid chain: Adenosylhomocysteinase (432 aa).

Serine 2 carries the post-translational modification N-acetylserine. Residues threonine 57, aspartate 131, and glutamate 156 each contribute to the substrate site. Position 157–159 (157–159 (TTT)) interacts with NAD(+). The residue at position 183 (serine 183) is a Phosphoserine. Lysine 186 and aspartate 190 together coordinate substrate. An N6-(2-hydroxyisobutyryl)lysine modification is found at lysine 186. Tyrosine 193 bears the Phosphotyrosine mark. NAD(+) is bound by residues 222–227 (GDVGKG), glutamate 243, asparagine 248, 299–301 (IGH), asparagine 346, and histidine 353.

It belongs to the adenosylhomocysteinase family. As to quaternary structure, homotetramer. Interaction with AHCYL1. It depends on NAD(+) as a cofactor.

The protein resides in the cytoplasm. It is found in the melanosome. It localises to the nucleus. Its subcellular location is the endoplasmic reticulum. It carries out the reaction S-adenosyl-L-homocysteine + H2O = L-homocysteine + adenosine. The protein operates within amino-acid biosynthesis; L-homocysteine biosynthesis; L-homocysteine from S-adenosyl-L-homocysteine: step 1/1. In terms of biological role, catalyzes the hydrolysis of S-adenosyl-L-homocysteine to form adenosine and homocysteine. Binds copper ions. The chain is Adenosylhomocysteinase (AHCY) from Homo sapiens (Human).